We begin with the raw amino-acid sequence, 168 residues long: Protein archease (168 aa).

The residue at position 2 (alanine 2) is an N-acetylalanine. Ca(2+)-binding residues include aspartate 39, aspartate 167, and isoleucine 168.

The protein belongs to the archease family. In terms of assembly, component of the tRNA-splicing ligase complex.

In terms of biological role, component of the tRNA-splicing ligase complex required to facilitate the enzymatic turnover of catalytic subunit RTCB. Together with DDX1, acts by facilitating the guanylylation of RTCB, a key intermediate step in tRNA ligation. This Mus musculus (Mouse) protein is Protein archease (Zbtb8os).